The following is a 456-amino-acid chain: Glutamate--tRNA ligase 1 (456 aa).

The 'HIGH' region motif lies at Pro-9–Asn-19. The 'KMSKS' region motif lies at Gly-250–Arg-254. Lys-253 contacts ATP.

Belongs to the class-I aminoacyl-tRNA synthetase family. Glutamate--tRNA ligase type 1 subfamily. As to quaternary structure, monomer.

The protein localises to the cytoplasm. It carries out the reaction tRNA(Glu) + L-glutamate + ATP = L-glutamyl-tRNA(Glu) + AMP + diphosphate. Catalyzes the attachment of glutamate to tRNA(Glu) in a two-step reaction: glutamate is first activated by ATP to form Glu-AMP and then transferred to the acceptor end of tRNA(Glu). This is Glutamate--tRNA ligase 1 from Chelativorans sp. (strain BNC1).